The sequence spans 416 residues: 46 kDa surface antigen (416 aa).

Positions 1 to 27 (MLRKKFLYSSAIYATSLASIIAFVAAG) are cleaved as a signal peptide. A lipid anchor (N-palmitoyl cysteine) is attached at Cys-28. Residue Cys-28 is the site of S-diacylglycerol cysteine attachment.

The protein localises to the cell membrane. The polypeptide is 46 kDa surface antigen (p46) (Mesomycoplasma hyopneumoniae (strain 232) (Mycoplasma hyopneumoniae)).